Consider the following 445-residue polypeptide: Tubulin beta-1 chain (445 aa).

The MREI motif motif lies at Met1–Ile4. Residues Gln11, Glu69, Ser138, Gly142, Thr143, Gly144, Asn204, and Asn226 each coordinate GTP. Glu69 contributes to the Mg(2+) binding site. The disordered stretch occupies residues Gln424–Ala445. Residues Thr429–Ala445 show a composition bias toward acidic residues. At Glu438 the chain carries 5-glutamyl polyglutamate.

The protein belongs to the tubulin family. In terms of assembly, dimer of alpha and beta chains. A typical microtubule is a hollow water-filled tube with an outer diameter of 25 nm and an inner diameter of 15 nM. Alpha-beta heterodimers associate head-to-tail to form protofilaments running lengthwise along the microtubule wall with the beta-tubulin subunit facing the microtubule plus end conferring a structural polarity. Microtubules usually have 13 protofilaments but different protofilament numbers can be found in some organisms and specialized cells. The cofactor is Mg(2+). Post-translationally, some glutamate residues at the C-terminus are polyglycylated, resulting in polyglycine chains on the gamma-carboxyl group. Glycylation is mainly limited to tubulin incorporated into axonemes (cilia and flagella) whereas glutamylation is prevalent in neuronal cells, centrioles, axonemes, and the mitotic spindle. Both modifications can coexist on the same protein on adjacent residues, and lowering polyglycylation levels increases polyglutamylation, and reciprocally. The precise function of polyglycylation is still unclear. Some glutamate residues at the C-terminus are polyglutamylated, resulting in polyglutamate chains on the gamma-carboxyl group. Polyglutamylation plays a key role in microtubule severing by spastin (SPAST). SPAST preferentially recognizes and acts on microtubules decorated with short polyglutamate tails: severing activity by SPAST increases as the number of glutamates per tubulin rises from one to eight, but decreases beyond this glutamylation threshold. As to expression, highly expressed in skeletal muscle.

Its subcellular location is the cytoplasm. The protein resides in the cytoskeleton. Its function is as follows. Tubulin is the major constituent of microtubules, a cylinder consisting of laterally associated linear protofilaments composed of alpha- and beta-tubulin heterodimers. Microtubules grow by the addition of GTP-tubulin dimers to the microtubule end, where a stabilizing cap forms. Below the cap, tubulin dimers are in GDP-bound state, owing to GTPase activity of alpha-tubulin. The protein is Tubulin beta-1 chain of Gallus gallus (Chicken).